The chain runs to 288 residues: 18S rRNA aminocarboxypropyltransferase (288 aa).

Residues Ser-43, Val-91, Leu-114, and Trp-129 each coordinate S-adenosyl-L-methionine. The span at 209–221 (IWSAGNLNHKPTL) shows a compositional bias: polar residues. The tract at residues 209–267 (IWSAGNLNHKPTLNTSSTHSNSEESRSPLHEPSEASLAHDEHSIPTDDNEETLTNLQAN) is disordered. Basic and acidic residues predominate over residues 229 to 253 (NSEESRSPLHEPSEASLAHDEHSIP).

It belongs to the TDD superfamily. TSR3 family.

Its subcellular location is the cytoplasm. It is found in the nucleus. The catalysed reaction is an N(1)-methylpseudouridine in rRNA + S-adenosyl-L-methionine = N(1)-methyl-N(3)-[(3S)-3-amino-3-carboxypropyl]pseudouridine in rRNA + S-methyl-5'-thioadenosine + H(+). It catalyses the reaction N(1)-methylpseudouridine(1191) in yeast 18S rRNA + S-adenosyl-L-methionine = N(1)-methyl-N(3)-[(3S)-3-amino-3-carboxypropyl]pseudouridine(1191) in yeast 18S rRNA + S-methyl-5'-thioadenosine + H(+). Functionally, aminocarboxypropyltransferase that catalyzes the aminocarboxypropyl transfer on pseudouridine at position 1191 (Psi1191) in 18S rRNA. It constitutes the last step in biosynthesis of the hypermodified N1-methyl-N3-(3-amino-3-carboxypropyl) pseudouridine (m1acp3-Psi) conserved in eukaryotic 18S rRNA. Required for processing 35S pre-rRNA at site D. This is 18S rRNA aminocarboxypropyltransferase from Schizosaccharomyces pombe (strain 972 / ATCC 24843) (Fission yeast).